The chain runs to 149 residues: 3-dehydroquinate dehydratase (149 aa).

Tyr24 acts as the Proton acceptor in catalysis. Substrate contacts are provided by Asn75, His81, and Asp88. Catalysis depends on His101, which acts as the Proton donor. Substrate is bound by residues 102–103 (LS) and Arg112.

Belongs to the type-II 3-dehydroquinase family. Homododecamer.

It carries out the reaction 3-dehydroquinate = 3-dehydroshikimate + H2O. It functions in the pathway metabolic intermediate biosynthesis; chorismate biosynthesis; chorismate from D-erythrose 4-phosphate and phosphoenolpyruvate: step 3/7. Catalyzes a trans-dehydration via an enolate intermediate. The protein is 3-dehydroquinate dehydratase of Bartonella tribocorum (strain CIP 105476 / IBS 506).